Here is a 198-residue protein sequence, read N- to C-terminus: Ribonuclease HII (198 aa).

One can recognise an RNase H type-2 domain in the interval 11 to 198; sequence NLIAGVDEVG…GPVKRVLGLV (188 aa). A divalent metal cation contacts are provided by D17, E18, and D109.

The protein belongs to the RNase HII family. The cofactor is Mn(2+). It depends on Mg(2+) as a cofactor.

It localises to the cytoplasm. The enzyme catalyses Endonucleolytic cleavage to 5'-phosphomonoester.. Endonuclease that specifically degrades the RNA of RNA-DNA hybrids. The sequence is that of Ribonuclease HII from Yersinia enterocolitica serotype O:8 / biotype 1B (strain NCTC 13174 / 8081).